The sequence spans 300 residues: Ribosomal protein bS6--L-glutamate ligase (300 aa).

Residues 104 to 287 (MQLLARQGID…IAGKMIRWIE (184 aa)) enclose the ATP-grasp domain. ATP-binding positions include lysine 141, 178–179 (EY), aspartate 187, and 211–213 (RSN). Positions 248, 260, and 262 each coordinate Mg(2+). Mn(2+)-binding residues include aspartate 248, glutamate 260, and asparagine 262.

It belongs to the RimK family. Mg(2+) serves as cofactor. The cofactor is Mn(2+).

An L-glutamate ligase that catalyzes the ATP-dependent post-translational addition of glutamate residues to the C-terminus of ribosomal protein bS6 (RpsF). Is also able to catalyze the synthesis of poly-alpha-glutamate in vitro, via ATP hydrolysis from unprotected glutamate as substrate. The number of glutamate residues added to either RpsF or to poly-alpha-glutamate changes with pH. In Escherichia coli O7:K1 (strain IAI39 / ExPEC), this protein is Ribosomal protein bS6--L-glutamate ligase.